Reading from the N-terminus, the 198-residue chain is MSTPRTAEITRNTNETQIRVAINIDGTGQQKLNTGVPFLDHMLDQIARHGLIDLDIEAKGDLHIDAHHTVEDVGITLGQAFAKAIGDKKGIRRYGHSYVPLDEALSRVVIDFSGRPGLEFHVPFTRSMIGTFDVDLTHEFFQGFVNHALVSLHIDNLRGANAHHQCETVFKAFGRALRMAAELDPRSVGTIPSTKGSL.

Belongs to the imidazoleglycerol-phosphate dehydratase family.

It is found in the cytoplasm. The enzyme catalyses D-erythro-1-(imidazol-4-yl)glycerol 3-phosphate = 3-(imidazol-4-yl)-2-oxopropyl phosphate + H2O. It functions in the pathway amino-acid biosynthesis; L-histidine biosynthesis; L-histidine from 5-phospho-alpha-D-ribose 1-diphosphate: step 6/9. The protein is Imidazoleglycerol-phosphate dehydratase of Janthinobacterium sp. (strain Marseille) (Minibacterium massiliensis).